The primary structure comprises 549 residues: Urocanate hydratase (549 aa).

NAD(+) contacts are provided by residues 46 to 47 (GG), Q124, 170 to 172 (GMG), E190, R195, 236 to 237 (NA), 257 to 261 (QTSAH), 267 to 268 (YV), and Y316. Residue C404 is part of the active site. Position 486 (G486) interacts with NAD(+).

The protein belongs to the urocanase family. Requires NAD(+) as cofactor.

The protein resides in the cytoplasm. The catalysed reaction is 4-imidazolone-5-propanoate = trans-urocanate + H2O. It participates in amino-acid degradation; L-histidine degradation into L-glutamate; N-formimidoyl-L-glutamate from L-histidine: step 2/3. Catalyzes the conversion of urocanate to 4-imidazolone-5-propionate. The sequence is that of Urocanate hydratase from Caldanaerobacter subterraneus subsp. tengcongensis (strain DSM 15242 / JCM 11007 / NBRC 100824 / MB4) (Thermoanaerobacter tengcongensis).